The following is a 407-amino-acid chain: MQYLISSLIFLIPSLGMVAGLSVAATVTIFLLMLFLRGINRHCERLKGAWQSHKAGLLRLLRQNLQFFLAMTIKTELLFTAWCFISCLFAIRPINSLATFIQVFILLFLGFTVSNCVPFGNRVQLKNSLILGILTAILLFFIEYSSHGFLTRTFKASFGLYMLDRGCALLSITSWVAIIILLSSGKRRHALMLYILVLYLLSISDSLASFLGFSIGGVIFILARLIKPIFFKLIAISLITGSLLFPVIAKQIEPRDLSEKYLATQPSAAHRLFIWHFVANKITLKPILGYGFASSKYIKVNNSEMINYNGEKWHPLPLHPHNNILQITLELGIIGLILFLCLVYKYLKQINNIKSSNFRAASYSCFINYYIIGMISYNIWQIWWISSGIWVLVLMKLLVKPDIVVDN.

Transmembrane regions (helical) follow at residues 15 to 35 (LGMV…LMLF), 71 to 91 (MTIK…LFAI), 100 to 120 (FIQV…VPFG), 129 to 149 (LILG…SHGF), 166 to 186 (GCAL…SSGK), 203 to 223 (ISDS…FILA), 229 to 249 (IFFK…PVIA), 272 to 292 (LFIW…GYGF), 324 to 344 (ILQI…CLVY), and 379 to 399 (IWQI…KLLV).

This sequence belongs to the O-antigen ligase family.

The protein resides in the membrane. This Rickettsia felis (strain ATCC VR-1525 / URRWXCal2) (Rickettsia azadi) protein is Putative polysaccharide ligase RF_0568.